The sequence spans 197 residues: Chalcone--flavanone isomerase 2 (197 aa).

Substrate-binding residues include Thr23, Asn88, and Thr165.

The protein belongs to the chalcone isomerase family.

It carries out the reaction a chalcone = a flavanone.. Its pathway is secondary metabolite biosynthesis; flavonoid biosynthesis. In terms of biological role, catalyzes the intramolecular cyclization of bicyclic chalcones into tricyclic (S)-flavanones. Responsible for the isomerization of 4,2',4',6'-tetrahydroxychalcone (also termed chalcone) into naringenin. The chain is Chalcone--flavanone isomerase 2 (CHI2) from Medicago sativa (Alfalfa).